The following is a 657-amino-acid chain: Glycogen debranching enzyme (657 aa).

The active-site Nucleophile is the aspartate 336. Glutamate 371 acts as the Proton donor in catalysis. Positions 460–479 (ANGEENRDGTNNNYSNNHGK) are disordered.

The protein belongs to the glycosyl hydrolase 13 family.

The enzyme catalyses Hydrolysis of (1-&gt;6)-alpha-D-glucosidic linkages to branches with degrees of polymerization of three or four glucose residues in limit dextrin.. Its pathway is glycan degradation; glycogen degradation. Functionally, removes maltotriose and maltotetraose chains that are attached by 1,6-alpha-linkage to the limit dextrin main chain, generating a debranched limit dextrin. The sequence is that of Glycogen debranching enzyme from Escherichia coli O81 (strain ED1a).